Here is a 109-residue protein sequence, read N- to C-terminus: Ubiquitin-related modifier 1 homolog (109 aa).

G109 is subject to 1-thioglycine. G109 is covalently cross-linked (Glycyl lysine isopeptide (Gly-Lys) (interchain with K-? in acceptor proteins)).

It belongs to the URM1 family. C-terminal thiocarboxylation occurs in 2 steps, it is first acyl-adenylated (-COAMP) via the hesA/moeB/thiF part of the MOCS3 homolog, then thiocarboxylated (-COSH) via the rhodanese domain of the MOCS3 homolog.

The protein localises to the cytoplasm. Its pathway is tRNA modification; 5-methoxycarbonylmethyl-2-thiouridine-tRNA biosynthesis. Acts as a sulfur carrier required for 2-thiolation of mcm(5)S(2)U at tRNA wobble positions of cytosolic tRNA(Lys), tRNA(Glu) and tRNA(Gln). Serves as sulfur donor in tRNA 2-thiolation reaction by being thiocarboxylated (-COSH) at its C-terminus by MOCS3. The sulfur is then transferred to tRNA to form 2-thiolation of mcm(5)S(2)U. Also acts as a ubiquitin-like protein (UBL) that is covalently conjugated via an isopeptide bond to lysine residues of target proteins. The thiocarboxylated form serves as substrate for conjugation and oxidative stress specifically induces the formation of UBL-protein conjugates. This Culex quinquefasciatus (Southern house mosquito) protein is Ubiquitin-related modifier 1 homolog.